Consider the following 1342-residue polypeptide: Putative aldehyde oxidase-like protein (1342 aa).

The interval 1 to 23 (MSDCNSGGGERRPNARATDAPPV) is disordered. The FAD-binding PCMH-type domain maps to 221–408 (ISSPREGWYC…LSIFIPHWAS (188 aa)).

Belongs to the xanthine dehydrogenase family.

The polypeptide is Putative aldehyde oxidase-like protein (Oryza sativa subsp. japonica (Rice)).